Consider the following 644-residue polypeptide: Macrolide export ATP-binding/permease protein MacB (644 aa).

In terms of domain architecture, ABC transporter spans 4 to 242 (IECKNINRYF…SNVGRIQEKA (239 aa)). An ATP-binding site is contributed by 40-47 (GQSGSGKS). The next 4 membrane-spanning stretches (helical) occupy residues 270–290 (LLTM…VALG), 524–544 (IALI…LVSV), 574–594 (LICV…SLVF), and 607–627 (AMSV…FGFM).

This sequence belongs to the ABC transporter superfamily. Macrolide exporter (TC 3.A.1.122) family. As to quaternary structure, homodimer.

Its subcellular location is the cell inner membrane. In terms of biological role, non-canonical ABC transporter that contains transmembrane domains (TMD), which form a pore in the inner membrane, and an ATP-binding domain (NBD), which is responsible for energy generation. Confers resistance against macrolides. This Neisseria meningitidis serogroup A / serotype 4A (strain DSM 15465 / Z2491) protein is Macrolide export ATP-binding/permease protein MacB.